The following is a 100-amino-acid chain: Small ribosomal subunit protein uS14 (100 aa).

It belongs to the universal ribosomal protein uS14 family. In terms of assembly, part of the 30S ribosomal subunit. Contacts proteins S3 and S10.

Functionally, binds 16S rRNA, required for the assembly of 30S particles and may also be responsible for determining the conformation of the 16S rRNA at the A site. The protein is Small ribosomal subunit protein uS14 of Prochlorococcus marinus (strain NATL1A).